Consider the following 676-residue polypeptide: Vitamin K-dependent protein S (676 aa).

The first 24 residues, 1–24, serve as a signal peptide directing secretion; it reads MRVLGGRCGALLACLLLVLPVSEA. Residues 25-41 constitute a propeptide that is removed on maturation; the sequence is NFLSKQQASQVLVRKRR. The 46-residue stretch at 42-87 folds into the Gla domain; that stretch reads ANSLLEETKQGNLERECIEELCNKEEAREVFENDPETDYFYPKYLV. Residues Glu47, Glu48, Glu55, Glu57, Glu60, Glu61, Glu66, Glu67, Glu70, Glu73, and Glu77 each carry the 4-carboxyglutamate modification. Cys58 and Cys63 are disulfide-bonded. Positions 88–116 are thrombin-sensitive; the sequence is CLRSFQTGLFTAARQSTNAYPDLRSCVNA. An EGF-like 1 domain is found at 117–155; the sequence is IPDQCSPLPCNEDGYMSCKDGKASFTCTCKPGWQGEKCE. 13 disulfides stabilise this stretch: Cys121–Cys134, Cys126–Cys143, Cys145–Cys154, Cys161–Cys175, Cys171–Cys184, Cys186–Cys199, Cys205–Cys217, Cys212–Cys226, Cys228–Cys241, Cys247–Cys256, Cys252–Cys265, Cys267–Cys282, and Cys449–Cys475. At Asp136 the chain carries (3R)-3-hydroxyaspartate. The region spanning 157 to 200 is the EGF-like 2; calcium-binding domain; the sequence is DINECKDPSNINGGCSQICDNTPGSYHCSCKNGFVMLSNKKDCK. The EGF-like 3; calcium-binding domain occupies 201–242; that stretch reads DVDECSLKPSICGTAVCKNIPGDFECECPEGYRYNLKSKSCE. The EGF-like 4; calcium-binding domain maps to 243–283; it reads DIDECSENMCAQLCVNYPGGYTCYCDGKKGFKLAQDQKSCE. 2 Laminin G-like domains span residues 299–475 and 484–666; these read LLYL…NKHC and YYPG…AHSC. N-linked (GlcNAc...) asparagine glycans are attached at residues Asn499, Asn509, and Asn530. Cys639 and Cys666 are disulfide-bonded.

Post-translationally, the iron and 2-oxoglutarate dependent 3-hydroxylation of aspartate and asparagine is (R) stereospecific within EGF domains. In terms of tissue distribution, plasma.

It localises to the secreted. In terms of biological role, anticoagulant plasma protein; it is a cofactor to activated protein C in the degradation of coagulation factors Va and VIIIa. It helps to prevent coagulation and stimulating fibrinolysis. The chain is Vitamin K-dependent protein S (PROS1) from Homo sapiens (Human).